The following is a 353-amino-acid chain: (S)-8-amino-7-oxononanoate synthase BioU (353 aa).

NAD(+) is bound at residue 10–14; sequence GTGGI. The active-site Nucleophile is the lysine 147. An Allysine modification is found at lysine 147. 214-215 is an NAD(+) binding site; sequence GT. The Proton acceptor role is filled by glutamate 218. The active-site Proton donor and proton acceptor is histidine 222.

This sequence belongs to the BioU family. Monomer.

The enzyme catalyses (8S)-8-amino-7-oxononanoate + L-lysyl-[protein] + CO2 = (S)-2-amino-6-oxohexanoyl-[protein] + (7R,8S)-8-amino-7-(carboxyamino)nonanoate + 2 H(+). It carries out the reaction (8S)-8-amino-7-oxononanoate + L-lysyl-[protein] + NADPH + H(+) = N(6)-[(2S,3R)-2-amino-8-carboxyoctan-3-yl]-L-lysyl-[protein] + NADP(+) + H2O. The catalysed reaction is N(6)-[(2S,3R)-2-amino-8-carboxyoctan-3-yl]-L-lysyl-[protein] + CO2 + NADP(+) + H2O = (S)-2-amino-6-oxohexanoyl-[protein] + (7R,8S)-8-amino-7-(carboxyamino)nonanoate + NADPH + 3 H(+). It catalyses the reaction (8S)-8-amino-7-oxononanoate + L-lysyl-[protein] + NADH + H(+) = N(6)-[(2S,3R)-2-amino-8-carboxyoctan-3-yl]-L-lysyl-[protein] + NAD(+) + H2O. The enzyme catalyses N(6)-[(2S,3R)-2-amino-8-carboxyoctan-3-yl]-L-lysyl-[protein] + CO2 + NAD(+) + H2O = (S)-2-amino-6-oxohexanoyl-[protein] + (7R,8S)-8-amino-7-(carboxyamino)nonanoate + NADH + 3 H(+). It functions in the pathway cofactor biosynthesis; biotin biosynthesis. In terms of biological role, a 'suicide' enzyme that participates in biotin synthesis. Catalyzes the formation of (S)-8-amino-7-oxononanoate (DAN-carbamic acid) from (7R,8S)-8-amino-7-(carboxyamino)nonanoate (DAN), a function equivalent to the cannonical BioA reaction and the first half-reaction of BioD. The cellular requirement for biotin is thought be low enough that this single turnover enzyme supplies a sufficient amount of the cofactor. Overall it catalyzes three reactions: formation of a covalent linkage with 8-amino-7-oxononanoate to yield a BioU-DAN conjugate at the epsilon-amino group of Lys124 of BioU using NAD(P)H, carboxylation of the conjugate to form BioU-DAN-carbamic acid, and release of DAN-carbamic acid using NAD(P)+. Complements a bioA deletion in E.coli. The polypeptide is (S)-8-amino-7-oxononanoate synthase BioU (Haloferax mediterranei (strain ATCC 33500 / DSM 1411 / JCM 8866 / NBRC 14739 / NCIMB 2177 / R-4) (Halobacterium mediterranei)).